The chain runs to 478 residues: UDP-N-acetylmuramate--L-alanine ligase (478 aa).

ATP is bound at residue 120–126 (GSHGKTT).

Belongs to the MurCDEF family.

It localises to the cytoplasm. It carries out the reaction UDP-N-acetyl-alpha-D-muramate + L-alanine + ATP = UDP-N-acetyl-alpha-D-muramoyl-L-alanine + ADP + phosphate + H(+). The protein operates within cell wall biogenesis; peptidoglycan biosynthesis. Functionally, cell wall formation. In Rickettsia felis (strain ATCC VR-1525 / URRWXCal2) (Rickettsia azadi), this protein is UDP-N-acetylmuramate--L-alanine ligase.